Consider the following 425-residue polypeptide: MAGPTLLKESGPREVFCGLTSIVWLHRRMPDAFFLVVGSRTCAHLIQSAAGVMIFAEPRFGTAILSERDLAGLADAHEELDRVARELLQRRPEIRTLFLVGSCPSEVIKLDLARAAERLNDELQGRVRVVNYSGSGIETTFTQGEDGALAALVPLLPSSAERQLLLVGTLADAVEDRLIHLFGRLGIDRVRSLPPRQSTALPPVGPGTTVLLTQPFLTDTARLLRNRGATVLTAPFPLGAEGSRRWMEAAAQAFEVAPSHVATVLDPLMERARIALEPHREVLAGKRIFLLPESQLELPLARFLQRECGMELVEVGTPYLNREQMAEELALLPEGTPVMEGQHVELQLDRVRDSAPDLVVCGMGLANPLEAEGIATKWSIELVFSPIHGIDQAGDLAELFSRPLRRRQLIHPGLHPTQPDQPVHA.

The [4Fe-4S] cluster site is built by C17, C42, and C103.

It belongs to the BchN/ChlN family. Protochlorophyllide reductase is composed of three subunits; ChlL, ChlN and ChlB. Forms a heterotetramer of two ChlB and two ChlN subunits. It depends on [4Fe-4S] cluster as a cofactor.

The catalysed reaction is chlorophyllide a + oxidized 2[4Fe-4S]-[ferredoxin] + 2 ADP + 2 phosphate = protochlorophyllide a + reduced 2[4Fe-4S]-[ferredoxin] + 2 ATP + 2 H2O. It functions in the pathway porphyrin-containing compound metabolism; chlorophyll biosynthesis (light-independent). Component of the dark-operative protochlorophyllide reductase (DPOR) that uses Mg-ATP and reduced ferredoxin to reduce ring D of protochlorophyllide (Pchlide) to form chlorophyllide a (Chlide). This reaction is light-independent. The NB-protein (ChlN-ChlB) is the catalytic component of the complex. The polypeptide is Light-independent protochlorophyllide reductase subunit N (Parasynechococcus marenigrum (strain WH8102)).